Reading from the N-terminus, the 3948-residue chain is Equisetin synthetase eqxS (3948 aa).

Residues 4–438 form the Ketosynthase family 3 (KS3) domain; sequence SEPIAVIGSA…GTNAHAIIEA (435 aa). Active-site for beta-ketoacyl synthase activity residues include C177, H316, and H358. Residues 543–847 form a malonyl-CoA:ACP transacylase (MAT) domain region; sequence IFTGQGTQWP…DTIEAISEGR (305 aa). An N-terminal hotdog fold region spans residues 931–1066; sequence HPLLGRRCHD…AQIKASLGAP (136 aa). The segment at 931–1233 is dehydratase (DH) domain; that stretch reads HPLLGRRCHD…MELVPFSPAT (303 aa). One can recognise a PKS/mFAS DH domain in the interval 931–1235; it reads HPLLGRRCHD…LVPFSPATPA (305 aa). The Proton acceptor; for dehydratase activity role is filled by H964. The C-terminal hotdog fold stretch occupies residues 1081–1235; the sequence is LRPVSVDRFY…LVPFSPATPA (155 aa). Residue D1141 is the Proton donor; for dehydratase activity of the active site. Residues 1376–1574 are methyltransferase (MT) domain; sequence MLQDVYEQGF…GIDTTTPPVH (199 aa). A ketoreductase (KR) domain region spans residues 2105–2277; sequence TFLLVGLTGE…VAASSIDISS (173 aa). In terms of domain architecture, Carrier 1 spans 2389-2464; sequence AIIKESFIVR…DLVDECLDLL (76 aa). S2424 carries the post-translational modification O-(pantetheine 4'-phosphoryl)serine. Positions 2480 to 2553 are disordered; sequence QAAKPTTVIP…NSTDILAPPR (74 aa). Composition is skewed to polar residues over residues 2487–2505 and 2513–2528; these read VIPQTPTRVTPPESSQGTS and GSDSSHSPIGTPLTSW. The span at 2529 to 2541 shows a compositional bias: basic and acidic residues; that stretch reads DRQDSSPPDKSDD. The tract at residues 2564–2991 is condensation (C) domain; the sequence is SYGQAGFWFL…IRGSDKTVDA (428 aa). The segment at 3026 to 3424 is adenylation (A) (KR) domain; sequence QVIQDNPDNI…DGLLFCDGRL (399 aa). Residues 3540 to 3617 enclose the Carrier 2 domain; it reads EILTPSEQRL…AMAGVLEDCG (78 aa). S3577 is modified (O-(pantetheine 4'-phosphoryl)serine). The segment at 3653–3870 is reductase (RED) domain; that stretch reads LTGSSGYLGR…MPVNEVVEAI (218 aa).

In the C-terminal section; belongs to the NRP synthetase family.

It catalyses the reaction L-serine + 7 malonyl-CoA + acetyl-CoA + 2 S-adenosyl-L-methionine + ATP + 8 NADPH + 11 H(+) = (5S)-3-[(2E,6R,8E,10E,12E)-2,6-dimethyltetradeca-2,8,10,12-tetraenoyl]-5-(hydroxymethyl)pyrrolidine-2,4-dione + AMP + 2 S-adenosyl-L-homocysteine + 7 CO2 + diphosphate + 8 NADP(+) + 8 CoA + 6 H2O. It functions in the pathway mycotoxin biosynthesis. Its function is as follows. Hybrid PKS-NRPS synthetase; part of the gene cluster that mediates the biosynthesis of equisetin, a trans-fused decalin-containing tetramic acid with antimicrobial activity. The PKS module of eqxS together with the enoylreductase eqxC catalyze the formation of the polyketide unit which is then conjugated to L-serine by the condensation domain of the eqxS NRPS module. Activity of the Dieckmann cyclase domain (RED) results in release of the Dieckmann product intermediate. Diels-Alderase eqx3 is involved in endo-selective Diels-Alder cycloaddition to form the decalin ring, leading to the production of N-desmethylequisetin also called trichosetin. Subsequent N-methylation is carried out by eqxD to give equisetin. The protein is Equisetin synthetase eqxS of Fusarium heterosporum.